Consider the following 99-residue polypeptide: Plastocyanin (99 aa).

In terms of domain architecture, Plastocyanin-like spans 1–99 (LDVLLGSDDG…AGMVGKVTVN (99 aa)). 4 residues coordinate Cu cation: H37, C84, H87, and M92.

It belongs to the plastocyanin family. Requires Cu(2+) as cofactor.

The protein localises to the plastid. It is found in the chloroplast thylakoid membrane. Its function is as follows. Participates in electron transfer between P700 and the cytochrome b6-f complex in photosystem I. This Mercurialis perennis (Dog's mercury) protein is Plastocyanin (PETE).